The primary structure comprises 191 residues: dCTP deaminase (191 aa).

Residues 112–117, 136–138, Gln-157, Tyr-173, and Gln-183 contribute to the dCTP site; these read KSTYAR and TLE. The active-site Proton donor/acceptor is the Glu-138.

It belongs to the dCTP deaminase family. Homotrimer.

The catalysed reaction is dCTP + H2O + H(+) = dUTP + NH4(+). Its pathway is pyrimidine metabolism; dUMP biosynthesis; dUMP from dCTP (dUTP route): step 1/2. Catalyzes the deamination of dCTP to dUTP. This chain is dCTP deaminase, found in Xylella fastidiosa (strain M12).